A 485-amino-acid chain; its full sequence is Delta(14)-sterol reductase (485 aa).

5 helical membrane-spanning segments follow: residues 18 to 38, 77 to 97, 131 to 151, 155 to 175, and 319 to 339; these read FFGP…VYVF, GLVS…SLIL, LAIL…WTFI, FIQI…FVYV, and SLGP…FYIF. NADP(+) is bound by residues Lys346, Arg350, Leu373, Trp378, and 385–386; that span reads NY. A helical transmembrane segment spans residues 431 to 451; sequence AKGWGMLITYFYILYFAILLI. Residues Asp457, 461–465, and Tyr472 contribute to the NADP(+) site; that span reads CHRKY.

Belongs to the ERG4/ERG24 family.

It localises to the membrane. It carries out the reaction 4,4-dimethyl-5alpha-cholesta-8,24-dien-3beta-ol + NADP(+) = 4,4-dimethyl-5alpha-cholesta-8,14,24-trien-3beta-ol + NADPH + H(+). Its pathway is steroid biosynthesis; zymosterol biosynthesis; zymosterol from lanosterol: step 2/6. Reduces the C14=C15 double bond of 4,4-dimethyl-cholesta-8,14,24-trienol to produce 4,4-dimethyl-cholesta-8,24-dienol. The chain is Delta(14)-sterol reductase from Fusarium vanettenii (Neocosmospora pisi).